We begin with the raw amino-acid sequence, 396 residues long: Putative 2-hydroxyacid dehydrogenase YPL113C (396 aa).

Residues 227 to 228 (SI), 311 to 313 (VGR), and D337 contribute to the NAD(+) site. Residue R313 is part of the active site. The active site involves E342. Catalysis depends on H361, which acts as the Proton donor. 361–364 (HIGS) contacts NAD(+).

The protein belongs to the D-isomer specific 2-hydroxyacid dehydrogenase family.

Functionally, putative 2-hydroxyacid dehydrogenase. In Saccharomyces cerevisiae (strain ATCC 204508 / S288c) (Baker's yeast), this protein is Putative 2-hydroxyacid dehydrogenase YPL113C.